The following is a 201-amino-acid chain: 3-isopropylmalate dehydratase small subunit (201 aa).

Belongs to the LeuD family. LeuD type 1 subfamily. Heterodimer of LeuC and LeuD.

It catalyses the reaction (2R,3S)-3-isopropylmalate = (2S)-2-isopropylmalate. Its pathway is amino-acid biosynthesis; L-leucine biosynthesis; L-leucine from 3-methyl-2-oxobutanoate: step 2/4. Functionally, catalyzes the isomerization between 2-isopropylmalate and 3-isopropylmalate, via the formation of 2-isopropylmaleate. This chain is 3-isopropylmalate dehydratase small subunit, found in Shewanella amazonensis (strain ATCC BAA-1098 / SB2B).